Here is a 153-residue protein sequence, read N- to C-terminus: Cell division protein SepF (153 aa).

Belongs to the SepF family. Homodimer. Interacts with FtsZ.

It is found in the cytoplasm. Its function is as follows. Cell division protein that is part of the divisome complex and is recruited early to the Z-ring. Probably stimulates Z-ring formation, perhaps through the cross-linking of FtsZ protofilaments. Its function overlaps with FtsA. In Clostridium tetani (strain Massachusetts / E88), this protein is Cell division protein SepF.